The chain runs to 167 residues: MHTFGYRANALLTFAVTALAFICAIASFSDKFSNQNPSAEIQILNINRFKKQSHGNDEVSLTLDISADLQSLFTWNTKQVFVFVAAEYETPKNSLNQVSLWDAIIPAKEHAKFRIQVSNKYRFIDQGQNLRGKDFNLTLHWHVMPKTGKMFADKIVLPGYSLPDAYR.

Over 1 to 11 (MHTFGYRANAL) the chain is Cytoplasmic. Residues 12–32 (LTFAVTALAFICAIASFSDKF) traverse the membrane as a helical; Signal-anchor for type II membrane protein segment. Over 33–167 (SNQNPSAEIQ…PGYSLPDAYR (135 aa)) the chain is Lumenal. Residue Asn136 is glycosylated (N-linked (GlcNAc...) asparagine).

Belongs to the SPCS3 family. In terms of assembly, component of the signal peptidase complex (SPC) composed of a catalytic subunit SEC11 and three accessory subunits SPCS1, SPCS2 and SPCS3. The complex induces a local thinning of the ER membrane which is used to measure the length of the signal peptide (SP) h-region of protein substrates. This ensures the selectivity of the complex towards h-regions shorter than 18-20 amino acids.

Its subcellular location is the endoplasmic reticulum membrane. Functionally, essential component of the signal peptidase complex (SPC) which catalyzes the cleavage of N-terminal signal sequences from nascent proteins as they are translocated into the lumen of the endoplasmic reticulum. Essential for the SPC catalytic activity, possibly by stabilizing and positioning the active center of the complex close to the lumenal surface. This Arabidopsis thaliana (Mouse-ear cress) protein is Signal peptidase complex subunit 3A.